A 201-amino-acid chain; its full sequence is ATP-dependent Clp protease proteolytic subunit 2 (201 aa).

Catalysis depends on Ser-100, which acts as the Nucleophile. His-125 is a catalytic residue.

It belongs to the peptidase S14 family. Fourteen ClpP subunits assemble into 2 heptameric rings which stack back to back to give a disk-like structure with a central cavity, resembling the structure of eukaryotic proteasomes.

It localises to the cytoplasm. It catalyses the reaction Hydrolysis of proteins to small peptides in the presence of ATP and magnesium. alpha-casein is the usual test substrate. In the absence of ATP, only oligopeptides shorter than five residues are hydrolyzed (such as succinyl-Leu-Tyr-|-NHMec, and Leu-Tyr-Leu-|-Tyr-Trp, in which cleavage of the -Tyr-|-Leu- and -Tyr-|-Trp bonds also occurs).. Cleaves peptides in various proteins in a process that requires ATP hydrolysis. Has a chymotrypsin-like activity. Plays a major role in the degradation of misfolded proteins. In Corynebacterium glutamicum (strain ATCC 13032 / DSM 20300 / JCM 1318 / BCRC 11384 / CCUG 27702 / LMG 3730 / NBRC 12168 / NCIMB 10025 / NRRL B-2784 / 534), this protein is ATP-dependent Clp protease proteolytic subunit 2.